The chain runs to 61 residues: Photosystem II reaction center protein K (61 aa).

Residues 1 to 24 (MLNIFSLMYICLNSALYSSSFLFA) constitute a propeptide that is removed on maturation. The chain crosses the membrane as a helical span at residues 40 to 60 (MPVIPVLFFLLAFVWQAAVSF).

This sequence belongs to the PsbK family. In terms of assembly, PSII is composed of 1 copy each of membrane proteins PsbA, PsbB, PsbC, PsbD, PsbE, PsbF, PsbH, PsbI, PsbJ, PsbK, PsbL, PsbM, PsbT, PsbX, PsbY, PsbZ, Psb30/Ycf12, at least 3 peripheral proteins of the oxygen-evolving complex and a large number of cofactors. It forms dimeric complexes.

It localises to the plastid. It is found in the chloroplast thylakoid membrane. In terms of biological role, one of the components of the core complex of photosystem II (PSII). PSII is a light-driven water:plastoquinone oxidoreductase that uses light energy to abstract electrons from H(2)O, generating O(2) and a proton gradient subsequently used for ATP formation. It consists of a core antenna complex that captures photons, and an electron transfer chain that converts photonic excitation into a charge separation. This chain is Photosystem II reaction center protein K, found in Citrus sinensis (Sweet orange).